Consider the following 133-residue polypeptide: Protein PsiE homolog (133 aa).

The next 4 membrane-spanning stretches (helical) occupy residues 13-33 (LQWILNIALIILSIVLSIFLI), 55-75 (VESIIVYFLYFEFIALIIKYF), 81-101 (FPLRYFIYIGITALIRLIIVS), and 105-125 (PMETLLYAGAILILVIALYIS).

It belongs to the PsiE family.

Its subcellular location is the cell membrane. This Bacillus cereus (strain ATCC 10987 / NRS 248) protein is Protein PsiE homolog.